Here is a 146-residue protein sequence, read N- to C-terminus: MAKVMRKIALDLGTKSCGFAISDPISNSFAIPLENFFFEENNFKKVINKLKHYEKKYEFDTIILGYPLRMTGTRSERSIMVEEFEKLLRKTFSQRIVLVDERLSTVKAKAMLKETNISQSKIKEKKDSMAAALLLNYYLNNFLGVR.

It belongs to the YqgF nuclease family.

It localises to the cytoplasm. Its function is as follows. Could be a nuclease involved in processing of the 5'-end of pre-16S rRNA. This is Putative pre-16S rRNA nuclease from Mycoplasmopsis pulmonis (strain UAB CTIP) (Mycoplasma pulmonis).